Here is a 121-residue protein sequence, read N- to C-terminus: Large ribosomal subunit protein bL12 (121 aa).

This sequence belongs to the bacterial ribosomal protein bL12 family. In terms of assembly, homodimer. Part of the ribosomal stalk of the 50S ribosomal subunit. Forms a multimeric L10(L12)X complex, where L10 forms an elongated spine to which 2 to 4 L12 dimers bind in a sequential fashion. Binds GTP-bound translation factors.

Its function is as follows. Forms part of the ribosomal stalk which helps the ribosome interact with GTP-bound translation factors. Is thus essential for accurate translation. This Pseudomonas fluorescens (strain Pf0-1) protein is Large ribosomal subunit protein bL12.